A 505-amino-acid polypeptide reads, in one-letter code: Phosphoethanolamine N-methyltransferase (505 aa).

Residues Gly-76, Arg-81, Asp-97, Asp-122, Val-123, and Asn-141 each coordinate S-adenosyl-L-homocysteine. 5 residues coordinate phosphocholine: Ser-174, Ser-179, Gly-180, Arg-184, and Tyr-191. N-methylethanolamine phosphate-binding positions include 260-261 (QY) and Tyr-269. Tyr-269 is a binding site for phosphocholine. S-adenosyl-L-homocysteine contacts are provided by Val-278, Ser-279, Gly-305, Asp-327, Asp-353, Cys-354, and Arg-370. Phosphocholine is bound by residues Tyr-401, Tyr-415, Arg-419, Tyr-421, and Lys-487. N-methylethanolamine phosphate-binding positions include Tyr-401, Tyr-415, 419-421 (RGY), and Lys-487.

This sequence belongs to the class I-like SAM-binding methyltransferase superfamily. PEAMT family.

It catalyses the reaction phosphoethanolamine + S-adenosyl-L-methionine = N-methylethanolamine phosphate + S-adenosyl-L-homocysteine + H(+). The enzyme catalyses N-methylethanolamine phosphate + S-adenosyl-L-methionine = N,N-dimethylethanolamine phosphate + S-adenosyl-L-homocysteine + H(+). The catalysed reaction is N,N-dimethylethanolamine phosphate + S-adenosyl-L-methionine = phosphocholine + S-adenosyl-L-homocysteine + H(+). It participates in phospholipid metabolism; phosphatidylcholine biosynthesis; phosphocholine from phosphoethanolamine: step 1/1. With respect to regulation, inhibited by phosphatidic acid. Functionally, involved in phosphocholine biosynthesis. Catalyzes the N-methylation of phosphoethanolamine, phosphomonomethylethanolamine and phosphodimethylethanolamine, the three methylation steps required to convert phosphoethanolamine to phosphocholine (PC). The chain is Phosphoethanolamine N-methyltransferase from Triticum aestivum (Wheat).